A 255-amino-acid chain; its full sequence is Hydroxyacylglutathione hydrolase (255 aa).

His56, His58, Asp60, His61, His114, Asp133, and His171 together coordinate Zn(2+).

The protein belongs to the metallo-beta-lactamase superfamily. Glyoxalase II family. In terms of assembly, monomer. It depends on Zn(2+) as a cofactor.

It carries out the reaction an S-(2-hydroxyacyl)glutathione + H2O = a 2-hydroxy carboxylate + glutathione + H(+). The protein operates within secondary metabolite metabolism; methylglyoxal degradation; (R)-lactate from methylglyoxal: step 2/2. Its function is as follows. Thiolesterase that catalyzes the hydrolysis of S-D-lactoyl-glutathione to form glutathione and D-lactic acid. The polypeptide is Hydroxyacylglutathione hydrolase (Nitrobacter hamburgensis (strain DSM 10229 / NCIMB 13809 / X14)).